Reading from the N-terminus, the 205-residue chain is Small ribosomal subunit protein uS4 (205 aa).

In terms of domain architecture, S4 RNA-binding spans 103–173 (RRLQTIVMKK…LEKSKRAEAA (71 aa)). Positions 174-205 (AREAAAEAAEAEQAAAQAAAPTPAPAAAAPKQ) are disordered. The segment covering 179-205 (AEAAEAEQAAAQAAAPTPAPAAAAPKQ) has biased composition (low complexity).

It belongs to the universal ribosomal protein uS4 family. Part of the 30S ribosomal subunit. Contacts protein S5. The interaction surface between S4 and S5 is involved in control of translational fidelity.

In terms of biological role, one of the primary rRNA binding proteins, it binds directly to 16S rRNA where it nucleates assembly of the body of the 30S subunit. Its function is as follows. With S5 and S12 plays an important role in translational accuracy. The protein is Small ribosomal subunit protein uS4 of Cenarchaeum symbiosum (strain A).